We begin with the raw amino-acid sequence, 478 residues long: ATP-dependent RNA helicase DDX19A (478 aa).

N-acetylalanine is present on Ala2. Residues 2-299 (ATDSWALAVD…DPNIIKLKRE (298 aa)) are N-terminal lobe. Lys26 participates in a covalent cross-link: Glycyl lysine isopeptide (Lys-Gly) (interchain with G-Cter in SUMO1); alternate. Lys26 is covalently cross-linked (Glycyl lysine isopeptide (Lys-Gly) (interchain with G-Cter in SUMO2); alternate). The segment at 34–53 (TNGVIKTSTTAEKTEEEEKE) is disordered. At Thr42 the chain carries Phosphothreonine. The tract at residues 54–67 (DRAAQSLLNKLIRS) is N-terminal helix. The Q motif motif lies at 91-119 (KSFEELRLKPQLLQGVYAMGFNRPSKIQE). ATP contacts are provided by residues Gln118 and 137–144 (SQSGTGKT). Residues 124–294 (MMLAEPPQNL…QKVVPDPNII (171 aa)) enclose the Helicase ATP-binding domain. The short motif at 241 to 244 (DEAD) is the DEAD box element. The tract at residues 300-478 (EETLDTIKQY…DLDEIEKIAN (179 aa)) is C-terminal lobe. The Helicase C-terminal domain maps to 305–473 (TIKQYYVLCN…RLDTDDLDEI (169 aa)). 2 residues coordinate ATP: Arg428 and Arg431.

It belongs to the DEAD box helicase family. DDX19/DBP5 subfamily. Found in testis, heart, brain, liver, skeletal muscle, and kidney.

The protein localises to the cytoplasm. The protein resides in the nucleus. Its subcellular location is the nucleoplasm. The enzyme catalyses ATP + H2O = ADP + phosphate + H(+). ATP-dependent RNA helicase involved in mRNA export from the nucleus. Rather than unwinding RNA duplexes, DDX19 functions as a remodeler of ribonucleoprotein particles, whereby proteins bound to nuclear mRNA are dissociated and replaced by cytoplasmic mRNA binding proteins. The sequence is that of ATP-dependent RNA helicase DDX19A (Ddx19a) from Mus musculus (Mouse).